The sequence spans 299 residues: Protein N-terminal and lysine N-methyltransferase EFM7 (299 aa).

S-adenosyl-L-methionine is bound by residues tryptophan 74, 100-102 (GAG), aspartate 122, tryptophan 155, and serine 178.

It belongs to the class I-like SAM-binding methyltransferase superfamily. EFM7 family.

The protein localises to the cytoplasm. Functionally, S-adenosyl-L-methionine-dependent protein methyltransferase that trimethylates the N-terminal glycine 'Gly-2' of elongation factor 1-alpha, before also catalyzing the mono- and dimethylation of 'Lys-3'. In Cryptococcus neoformans var. neoformans serotype D (strain B-3501A) (Filobasidiella neoformans), this protein is Protein N-terminal and lysine N-methyltransferase EFM7.